A 112-amino-acid chain; its full sequence is ATP synthase epsilon chain (112 aa).

This sequence belongs to the ATPase epsilon chain family. F-type ATPases have 2 components, CF(1) - the catalytic core - and CF(0) - the membrane proton channel. CF(1) has five subunits: alpha(3), beta(3), gamma(1), delta(1), epsilon(1). CF(0) has three main subunits: a, b and c.

Its subcellular location is the cell membrane. In terms of biological role, produces ATP from ADP in the presence of a proton gradient across the membrane. The chain is ATP synthase epsilon chain from Rickettsia africae (strain ESF-5).